A 208-amino-acid polypeptide reads, in one-letter code: 3-demethoxyubiquinol 3-hydroxylase (208 aa).

Fe cation contacts are provided by Glu57, Glu87, His90, Glu139, Glu171, and His174.

The protein belongs to the COQ7 family. The cofactor is Fe cation.

Its subcellular location is the cell membrane. It carries out the reaction a 5-methoxy-2-methyl-3-(all-trans-polyprenyl)benzene-1,4-diol + AH2 + O2 = a 3-demethylubiquinol + A + H2O. It functions in the pathway cofactor biosynthesis; ubiquinone biosynthesis. Catalyzes the hydroxylation of 2-nonaprenyl-3-methyl-6-methoxy-1,4-benzoquinol during ubiquinone biosynthesis. The protein is 3-demethoxyubiquinol 3-hydroxylase of Nitrosospira multiformis (strain ATCC 25196 / NCIMB 11849 / C 71).